A 173-amino-acid polypeptide reads, in one-letter code: MAKSRKSNRDKSKDSNWQERVIQIRRVSKVVKGGKKLSFRAIVVVGNEKGQVGVGVGKAGDVIGAVRKGVADGKKQLIDVSLTKSSSITHVAKGVSGGAKVIVRPAAPGTGVIAGGAVRTVLELAGLKNILAKQLGSNNPLNNARAVINALEGLRTFSEVAQERGVPLEHLYT.

One can recognise an S5 DRBM domain in the interval 17-80; that stretch reads WQERVIQIRR…ADGKKQLIDV (64 aa).

This sequence belongs to the universal ribosomal protein uS5 family. In terms of assembly, part of the 30S ribosomal subunit. Contacts proteins S4 and S8.

In terms of biological role, with S4 and S12 plays an important role in translational accuracy. Its function is as follows. Located at the back of the 30S subunit body where it stabilizes the conformation of the head with respect to the body. This is Small ribosomal subunit protein uS5 from Crocosphaera subtropica (strain ATCC 51142 / BH68) (Cyanothece sp. (strain ATCC 51142)).